A 79-amino-acid polypeptide reads, in one-letter code: Small polypeptide DEVIL 8 (79 aa).

A compositionally biased stretch (polar residues) spans 1-12; it reads MSRLRNSAQLQL. The interval 1 to 37 is disordered; that stretch reads MSRLRNSAQLQLSKKESLGDNGGALNTTRSSRQKQGK. An N-linked (GlcNAc...) asparagine glycan is attached at Asn-26. The segment at 39–70 is required for DVL/RTFL small polypeptide activity; that stretch reads GFTRKCGRLVKEQRARFYIMRRCVVMLICWTD. Residues 55–71 traverse the membrane as a helical segment; sequence FYIMRRCVVMLICWTDH. Asn-74 is a glycosylation site (N-linked (GlcNAc...) asparagine).

Belongs to the DVL/RTFL small polypeptides family.

Its subcellular location is the cell membrane. Small polypeptide acting as a regulatory molecule which coordinates cellular responses required for differentiation, growth and development, probably by restricting polar cell proliferation in lateral organs and coordinating socket cell recruitment and differentiation at trichome sites. The sequence is that of Small polypeptide DEVIL 8 from Arabidopsis thaliana (Mouse-ear cress).